The following is a 514-amino-acid chain: Beta-glucosidase 16 (514 aa).

Positions 1–21 (MRGKFLSLLLLITLACIGVSA) are cleaved as a signal peptide. Residue Q49 coordinates a beta-D-glucoside. An N-linked (GlcNAc...) asparagine glycan is attached at N80. Residues H153 and 198 to 199 (NE) contribute to the a beta-D-glucoside site. The active-site Proton donor is E199. The cysteines at positions 218 and 226 are disulfide-linked. Y343 contributes to the a beta-D-glucoside binding site. The N-linked (GlcNAc...) asparagine glycan is linked to N357. Residues E413, W458, 465–466 (EW), and F474 each bind a beta-D-glucoside. The active-site Nucleophile is the E413.

Belongs to the glycosyl hydrolase 1 family. In terms of tissue distribution, expressed at low levels in cauline leaves and flowers.

The catalysed reaction is Hydrolysis of terminal, non-reducing beta-D-glucosyl residues with release of beta-D-glucose.. The protein is Beta-glucosidase 16 of Arabidopsis thaliana (Mouse-ear cress).